The sequence spans 196 residues: Auxin-induced protein 22B (196 aa).

An EAR-like (transcriptional repression) motif is present at residues 18–22 (LRLGL). Residues 44–74 (RQVRETSQDSVSISKASHHQQHVETVSAPPP) are disordered. The 88-residue stretch at 99–186 (GIFVKVSMDG…SCKRLRIMKG (88 aa)) folds into the PB1 domain.

The protein belongs to the Aux/IAA family. As to quaternary structure, homodimers and heterodimers.

It is found in the nucleus. Its function is as follows. Aux/IAA proteins are short-lived transcriptional factors that function as repressors of early auxin response genes at low auxin concentrations. Repression is thought to result from the interaction with auxin response factors (ARFs), proteins that bind to the auxin-responsive promoter element (AuxRE). Formation of heterodimers with ARF proteins may alter their ability to modulate early auxin response genes expression. The protein is Auxin-induced protein 22B (AUX22B) of Vigna radiata var. radiata (Mung bean).